The following is a 199-amino-acid chain: Probable molybdenum cofactor guanylyltransferase (199 aa).

Residues 6–8, Lys18, Asp65, and Asp97 each bind GTP; that span reads LAG. Asp97 is a binding site for Mg(2+).

The protein belongs to the MobA family. It depends on Mg(2+) as a cofactor.

The protein localises to the cytoplasm. It catalyses the reaction Mo-molybdopterin + GTP + H(+) = Mo-molybdopterin guanine dinucleotide + diphosphate. Transfers a GMP moiety from GTP to Mo-molybdopterin (Mo-MPT) cofactor (Moco or molybdenum cofactor) to form Mo-molybdopterin guanine dinucleotide (Mo-MGD) cofactor. The protein is Probable molybdenum cofactor guanylyltransferase of Staphylococcus aureus (strain Mu50 / ATCC 700699).